Reading from the N-terminus, the 364-residue chain is Deoxyribonuclease-2-alpha (364 aa).

The signal sequence occupies residues 1-21; the sequence is MATLSPLLLAALLWVPVGTLT. Residues Cys-22 and Cys-161 are joined by a disulfide bond. Residues Asn-72, Asn-88, Asn-171, Asn-214, Asn-268, and Asn-292 are each glycosylated (N-linked (GlcNAc...) asparagine). 2 cysteine pairs are disulfide-bonded: Cys-269–Cys-349 and Cys-310–Cys-329. His-297 is a catalytic residue.

The protein belongs to the DNase II family.

It localises to the lysosome. It carries out the reaction Endonucleolytic cleavage to nucleoside 3'-phosphates and 3'-phosphooligonucleotide end-products.. Its function is as follows. Hydrolyzes DNA under acidic conditions with a preference for double-stranded DNA. Plays a major role in the clearance of nucleic acids generated through apoptosis, hence preventing autoinflammation. Necessary for proper fetal development and for definitive erythropoiesis in fetal liver and bone marrow, where it degrades nuclear DNA expelled from erythroid precursor cells. In Sus scrofa (Pig), this protein is Deoxyribonuclease-2-alpha (DNASE2).